Here is a 102-residue protein sequence, read N- to C-terminus: Cytochrome b (102 aa).

3 helical membrane passes run 1-21 (FGSLLGLCLITQILTGLFLAM), 45-66 (WLMRNIHANGASFFFICIFLHI), and 81-101 (WNIGVILLFLVMATAFVGYVL). Residues histidine 51 and histidine 65 each contribute to the heme b site.

The protein belongs to the cytochrome b family. The cytochrome bc1 complex contains 3 respiratory subunits (MT-CYB, CYC1 and UQCRFS1), 2 core proteins (UQCRC1 and UQCRC2) and probably 6 low-molecular weight proteins. Heme b serves as cofactor.

The protein resides in the mitochondrion inner membrane. Its function is as follows. Component of the ubiquinol-cytochrome c reductase complex (complex III or cytochrome b-c1 complex) that is part of the mitochondrial respiratory chain. The b-c1 complex mediates electron transfer from ubiquinol to cytochrome c. Contributes to the generation of a proton gradient across the mitochondrial membrane that is then used for ATP synthesis. This is Cytochrome b (mt-cyb) from Ambystoma tigrinum (Eastern tiger salamander).